A 226-amino-acid polypeptide reads, in one-letter code: Myosin regulatory light chain 10 (226 aa).

3 consecutive EF-hand domains span residues 84–119 (NSPA…LGRI), 154–189 (DPEE…QADR), and 190–225 (FSEE…GEEK). Residues D97, N99, D101, and D108 each contribute to the Ca(2+) site.

Myosin is a hexamer of 2 heavy chains and 4 light chains.

The chain is Myosin regulatory light chain 10 (MYL10) from Homo sapiens (Human).